Reading from the N-terminus, the 66-residue chain is Large ribosomal subunit protein uL29 (66 aa).

This sequence belongs to the universal ribosomal protein uL29 family.

This chain is Large ribosomal subunit protein uL29, found in Bartonella tribocorum (strain CIP 105476 / IBS 506).